Here is a 206-residue protein sequence, read N- to C-terminus: MASRRRTLLKVIILGDSGVGKTSLMNQYVNKKFSNQYKATIGADFLTKEVQFEDRLFTLQIWDTAGQERFQSLGVAFYRGADCCVLVYDVNSMKSFDNLNNWREEFLIQASPSDPDNFPFVLLGNKVDVDGGNSRVVSEKKAKAWCASKGNIPYFETSAKEGTNVEDAFQCIVKNALKNEPEEELYVPDTVDVVGGNRAQRSSGCC.

GTP-binding positions include 15–22 (GDSGVGKT), 63–67 (DTAGQ), and 125–128 (NKVD). S-geranylgeranyl cysteine attachment occurs at residues Cys-205 and Cys-206.

The protein belongs to the small GTPase superfamily. Rab family.

It localises to the cell membrane. Protein transport. Probably involved in vesicular traffic. The protein is Ras-related protein Rab7 of Cenchrus ciliaris (Buffelgrass).